The primary structure comprises 257 residues: 3-deoxy-manno-octulosonate cytidylyltransferase (257 aa).

The protein belongs to the KdsB family.

It is found in the cytoplasm. It carries out the reaction 3-deoxy-alpha-D-manno-oct-2-ulosonate + CTP = CMP-3-deoxy-beta-D-manno-octulosonate + diphosphate. It participates in nucleotide-sugar biosynthesis; CMP-3-deoxy-D-manno-octulosonate biosynthesis; CMP-3-deoxy-D-manno-octulosonate from 3-deoxy-D-manno-octulosonate and CTP: step 1/1. Its pathway is bacterial outer membrane biogenesis; lipopolysaccharide biosynthesis. Activates KDO (a required 8-carbon sugar) for incorporation into bacterial lipopolysaccharide in Gram-negative bacteria. This chain is 3-deoxy-manno-octulosonate cytidylyltransferase, found in Xylella fastidiosa (strain M23).